Here is a 186-residue protein sequence, read N- to C-terminus: TATA-box-binding protein F (186 aa).

2 tandem repeats follow at residues 10-86 and 101-179.

Belongs to the TBP family.

Functionally, general factor that plays a role in the activation of archaeal genes transcribed by RNA polymerase. Binds specifically to the TATA box promoter element which lies close to the position of transcription initiation. The chain is TATA-box-binding protein F (tbpF) from Halobacterium salinarum (strain ATCC 700922 / JCM 11081 / NRC-1) (Halobacterium halobium).